The following is a 510-amino-acid chain: 2,3-bisphosphoglycerate-independent phosphoglycerate mutase (510 aa).

Mn(2+)-binding residues include Asp12 and Ser62. Residue Ser62 is the Phosphoserine intermediate of the active site. Substrate-binding positions include His123, 153-154, Arg185, Arg191, 260-263, and Lys335; these read RD and RPDR. Mn(2+)-binding residues include Asp402, His406, Asp443, His444, and His461.

Belongs to the BPG-independent phosphoglycerate mutase family. Monomer. Requires Mn(2+) as cofactor.

The catalysed reaction is (2R)-2-phosphoglycerate = (2R)-3-phosphoglycerate. Its pathway is carbohydrate degradation; glycolysis; pyruvate from D-glyceraldehyde 3-phosphate: step 3/5. Functionally, catalyzes the interconversion of 2-phosphoglycerate and 3-phosphoglycerate. This Listeria innocua serovar 6a (strain ATCC BAA-680 / CLIP 11262) protein is 2,3-bisphosphoglycerate-independent phosphoglycerate mutase.